Here is a 1314-residue protein sequence, read N- to C-terminus: Tetratricopeptide repeat protein 21A (1314 aa).

TPR repeat units lie at residues 110–143 (STAL…SSGS), 214–247 (LPAL…DENN), 326–359 (ALVA…EENR), 494–527 (MEPL…DPTF), 529–561 (DAHL…NFQV), 565–598 (PLYH…PTSK), 616–649 (ASIL…FSGT), 721–754 (PHSS…NPHD), 755–788 (ASLV…SGQD), 790–821 (LCCE…DSGV), 831–863 (VKCL…QSRI), 883–916 (ASIC…SPTD), 918–950 (KVVL…EQTH), 951–984 (ERAA…APDN), 986–1018 (LVLN…SSRV), 1022–1055 (PGFN…STWG), 1195–1228 (EKSW…NKSC), 1230–1262 (RAYE…SHQA), and 1264–1297 (PAIG…HPKY).

The protein belongs to the TTC21 family. Interacts with IFT20. Interacts with IFT52. Interacts with IFT140. Interacts with CEP78; regulating IFT20 stability and localization.

In terms of biological role, intraflagellar transport (IFT)-associated protein required for spermatogenesis. Required for sperm flagellar formation and intraflagellar transport. In Mus musculus (Mouse), this protein is Tetratricopeptide repeat protein 21A (Ttc21a).